Reading from the N-terminus, the 348-residue chain is Alcohol dehydrogenase 1 (348 aa).

Positions 44, 67, 98, 101, 104, 112, and 154 each coordinate Zn(2+). NAD(+) is bound by residues 178–184 (GACGGLG), Asp202, Lys207, 269–271 (VGL), and Arg341.

The protein belongs to the zinc-containing alcohol dehydrogenase family. As to quaternary structure, homotetramer. Zn(2+) is required as a cofactor.

It localises to the cytoplasm. It catalyses the reaction a primary alcohol + NAD(+) = an aldehyde + NADH + H(+). The catalysed reaction is a secondary alcohol + NAD(+) = a ketone + NADH + H(+). The sequence is that of Alcohol dehydrogenase 1 (ADH1) from Kluyveromyces marxianus (Yeast).